The chain runs to 344 residues: Phosphoribosylformylglycinamidine cyclo-ligase (344 aa).

The protein belongs to the AIR synthase family.

It is found in the cytoplasm. It catalyses the reaction 2-formamido-N(1)-(5-O-phospho-beta-D-ribosyl)acetamidine + ATP = 5-amino-1-(5-phospho-beta-D-ribosyl)imidazole + ADP + phosphate + H(+). Its pathway is purine metabolism; IMP biosynthesis via de novo pathway; 5-amino-1-(5-phospho-D-ribosyl)imidazole from N(2)-formyl-N(1)-(5-phospho-D-ribosyl)glycinamide: step 2/2. The sequence is that of Phosphoribosylformylglycinamidine cyclo-ligase from Exiguobacterium sp. (strain ATCC BAA-1283 / AT1b).